A 485-amino-acid polypeptide reads, in one-letter code: Rhamnulokinase (485 aa).

11–15 (ASSGR) lines the ATP pocket. Residues A79 and 234–236 (HDT) contribute to the substrate site. D235 acts as the Proton acceptor in catalysis. T257 contacts ATP. N294 is a binding site for substrate. Residues Q302 and G401 each coordinate ATP.

This sequence belongs to the rhamnulokinase family. Requires Mg(2+) as cofactor.

The catalysed reaction is L-rhamnulose + ATP = L-rhamnulose 1-phosphate + ADP + H(+). It participates in carbohydrate degradation; L-rhamnose degradation; glycerone phosphate from L-rhamnose: step 2/3. In terms of biological role, involved in the catabolism of L-rhamnose (6-deoxy-L-mannose). Catalyzes the transfer of the gamma-phosphate group from ATP to the 1-hydroxyl group of L-rhamnulose to yield L-rhamnulose 1-phosphate. The polypeptide is Rhamnulokinase (Ligilactobacillus salivarius (strain UCC118) (Lactobacillus salivarius)).